The following is a 504-amino-acid chain: Maturase K (504 aa).

The protein belongs to the intron maturase 2 family. MatK subfamily.

It localises to the plastid. Its subcellular location is the chloroplast. Functionally, usually encoded in the trnK tRNA gene intron. Probably assists in splicing its own and other chloroplast group II introns. The sequence is that of Maturase K from Nepenthes distillatoria (Pitcher plant).